Consider the following 298-residue polypeptide: MSFSRSFSRLASSKFVLPVAAAAVGLASYSFTSSSFIANEPSKAFKGGDEWIDLKLISSHDLSHDTKHLVFELPNKDDVSGLVTASLLMTKFVTPKGSNVIRPYTPVSDTEQAGTIDFVVKKYEGGKMSSHIHDLKPNDTLSFKGPFVKWKWEPNQFKSIALIGGGTGITPLYQLIHEITKNPADKTQVSLFYGSQTPDDILIKKELDALAAKHKDQVKIVYFVDKADASWKGETGYISKEFLQKNLPAPGPDNKIFVCGPPPLYKAVSGPKVSPTDQGELTGSLAELGFSKENVFKF.

The chain crosses the membrane as a helical span at residues 15-38 (FVLPVAAAAVGLASYSFTSSSFIA). The FAD-binding FR-type domain maps to 49–153 (DEWIDLKLIS…KGPFVKWKWE (105 aa)). 156 to 191 (QFKSIALIGGGTGITPLYQLIHEITKNPADKTQVSL) contributes to the FAD binding site.

The protein belongs to the flavoprotein pyridine nucleotide cytochrome reductase family. It depends on FAD as a cofactor.

It is found in the mitochondrion outer membrane. It catalyses the reaction 2 Fe(III)-[cytochrome b5] + NADH = 2 Fe(II)-[cytochrome b5] + NAD(+) + H(+). In terms of biological role, may mediate the reduction of outer membrane cytochrome b5. This is NADH-cytochrome b5 reductase 2 (MCR1) from Scheffersomyces stipitis (strain ATCC 58785 / CBS 6054 / NBRC 10063 / NRRL Y-11545) (Yeast).